Consider the following 406-residue polypeptide: Dihydroorotase, mitochondrial (406 aa).

The N-terminal 41 residues, 1–41, are a transit peptide targeting the mitochondrion; that stretch reads MQTAATSTFFANPHVKHLPGPFLRPSPHYGALVHLPSFRNK. Positions 69, 71, 155, 193, 231, and 305 each coordinate Zn(2+). Residue Lys155 is modified to N6-carboxylysine.

This sequence belongs to the metallo-dependent hydrolases superfamily. DHOase family. Class II DHOase subfamily. Zn(2+) is required as a cofactor.

The protein localises to the mitochondrion. The catalysed reaction is (S)-dihydroorotate + H2O = N-carbamoyl-L-aspartate + H(+). It functions in the pathway pyrimidine metabolism; UMP biosynthesis via de novo pathway; (S)-dihydroorotate from bicarbonate: step 3/3. This Oryza sativa subsp. japonica (Rice) protein is Dihydroorotase, mitochondrial (PYRC).